The following is a 476-amino-acid chain: Adenosylhomocysteinase (476 aa).

Substrate contacts are provided by Thr67, Asp142, and Glu202. 203 to 205 (TTT) serves as a coordination point for NAD(+). Substrate contacts are provided by Lys232 and Asp236. Residues Asn237, 266 to 271 (GYGDVG), Glu289, Asn324, 345 to 347 (IGH), and Asn390 contribute to the NAD(+) site.

The protein belongs to the adenosylhomocysteinase family. The cofactor is NAD(+).

It localises to the cytoplasm. The enzyme catalyses S-adenosyl-L-homocysteine + H2O = L-homocysteine + adenosine. It functions in the pathway amino-acid biosynthesis; L-homocysteine biosynthesis; L-homocysteine from S-adenosyl-L-homocysteine: step 1/1. May play a key role in the regulation of the intracellular concentration of adenosylhomocysteine. The sequence is that of Adenosylhomocysteinase from Prochlorococcus marinus (strain MIT 9303).